The chain runs to 475 residues: Homeobox even-skipped homolog protein 2 (475 aa).

Disordered regions lie at residues 82 to 113 (PSSE…AEAD) and 155 to 189 (TSAS…SGAD). Positions 83–96 (SSESTVSSEIASAT) are enriched in low complexity. The segment covering 160-186 (SGLGSLHGGGGGGNSGAAALGGSGSGS) has biased composition (gly residues). A DNA-binding region (homeobox) is located at residues 191–250 (VRRYRTAFTREQIARLEKEFYRENYVSRPRRCELAAALNLPETTIKVWFQNRRMKDKRQR).

The protein belongs to the even-skipped homeobox family.

Its subcellular location is the nucleus. In Mus musculus (Mouse), this protein is Homeobox even-skipped homolog protein 2 (Evx2).